The sequence spans 117 residues: G antigen 4 (117 aa).

The segment at 1-117 (MSWRGRSTYY…PEEGEKQSQC (117 aa)) is disordered. Acidic residues-rich tracts occupy residues 32 to 45 (FSDE…EEGE) and 87 to 96 (ECEDGPDGQE). Over residues 103 to 117 (EEVKTPEEGEKQSQC) the composition is skewed to basic and acidic residues.

The protein belongs to the GAGE family. As to expression, expressed in a variety of tumor tissues but not in normal tissues, except testis.

Its function is as follows. Antigen, recognized on melanoma by autologous cytolytic T-lymphocytes. The protein is G antigen 4 of Homo sapiens (Human).